We begin with the raw amino-acid sequence, 1162 residues long: Enhanced level of genomic instability 1 (1162 aa).

Disordered stretches follow at residues 1–136 (MTDV…ADNQ), 144–163 (KAGKPENVGVSPVSTAKPKP), 179–202 (LGVNEGGAESPADQEIGSEAATPT), 249–319 (KTDA…TKKR), 348–380 (METPKRRTLRRKSQQETPIVAESTPSSRPRRSC), 611–634 (RSMEQNMAQNEEEAKPPPSAPNGE), and 666–697 (WSGNGGSNRNSQGMDDTFDMSNDSASMGSSSN). Over residues 65–78 (KQKHREKHKRKREE) the composition is skewed to basic residues. Positions 79 to 111 (KRRAALMEDQKSTTEEVKANAKEKPQPLREKSS) are enriched in basic and acidic residues. The segment covering 125–136 (PLKSSTPVADNQ) has biased composition (polar residues). Basic residues predominate over residues 268–278 (KRLRGRPRSRR). 2 stretches are compositionally biased toward low complexity: residues 666 to 676 (WSGNGGSNRNS) and 684 to 697 (DMSNDSASMGSSSN). ATP is bound at residue 703–710 (GPSSSGKT). Disordered stretches follow at residues 900-923 (GDSTRDRTGGGIKSPTKTSNSRLA) and 975-1008 (QAAGGGSRTAAKRKSRSPKKAWLSSATGQKSDGH). Over residues 984 to 993 (AAKRKSRSPK) the composition is skewed to basic residues. A compositionally biased stretch (polar residues) spans 998–1008 (SSATGQKSDGH).

It belongs to the ELG1 family. In terms of assembly, component of a heteropentameric Elg1 RFC-like complex composed of one large subunit (elg1) and four small subunits (RfC4, RfC38, CG8142 and RfC3). As part of the complex, might interact with the Enok complex, composed of enok, Br140, Eaf6 and Ing5. Within the Enok complex, interacts directly with Br140. In terms of tissue distribution, expressed at higher levels in the germline nurse cells than in the somatic follicle cells.

The protein resides in the nucleus. Functionally, has an important role in DNA replication and in maintaining genome integrity during replication stress. Promotes PCNA deubiquitination. As component of the Elg1 RFC-like complex, regulates the functions of the DNA polymerase processivity factor PCNA by unloading it from DNA after replication during the S phase of the cell cycle. The PCNA-unloading might be regulated via interaction with the Enok acetyltransferase complex. Might have a role in restarting of stalled/regressed replication forks during replication stress. In the ovaries, has a role in nurse cell endoreplication. This is Enhanced level of genomic instability 1 from Drosophila melanogaster (Fruit fly).